A 252-amino-acid polypeptide reads, in one-letter code: Enolase-phosphatase E1 (252 aa).

Asp18 and Glu20 together coordinate Mg(2+). Substrate-binding positions include 149-150 (SS) and Lys184. Asp209 lines the Mg(2+) pocket.

This sequence belongs to the HAD-like hydrolase superfamily. MasA/MtnC family. As to quaternary structure, monomer. It depends on Mg(2+) as a cofactor.

The protein resides in the cytoplasm. It is found in the nucleus. It catalyses the reaction 5-methylsulfanyl-2,3-dioxopentyl phosphate + H2O = 1,2-dihydroxy-5-(methylsulfanyl)pent-1-en-3-one + phosphate. The protein operates within amino-acid biosynthesis; L-methionine biosynthesis via salvage pathway; L-methionine from S-methyl-5-thio-alpha-D-ribose 1-phosphate: step 3/6. It functions in the pathway amino-acid biosynthesis; L-methionine biosynthesis via salvage pathway; L-methionine from S-methyl-5-thio-alpha-D-ribose 1-phosphate: step 4/6. Bifunctional enzyme that catalyzes the enolization of 2,3-diketo-5-methylthiopentyl-1-phosphate (DK-MTP-1-P) into the intermediate 2-hydroxy-3-keto-5-methylthiopentenyl-1-phosphate (HK-MTPenyl-1-P), which is then dephosphorylated to form the acireductone 1,2-dihydroxy-3-keto-5-methylthiopentene (DHK-MTPene). In Naegleria gruberi (Amoeba), this protein is Enolase-phosphatase E1.